The following is a 372-amino-acid chain: Sulfate/thiosulfate import ATP-binding protein CysA (372 aa).

One can recognise an ABC transporter domain in the interval 3–237; it reads IQVQHVTKRF…PATPFVYGFL (235 aa). 35–42 contributes to the ATP binding site; that stretch reads GPSGCGKT.

It belongs to the ABC transporter superfamily. Sulfate/tungstate importer (TC 3.A.1.6) family. As to quaternary structure, the complex is composed of two ATP-binding proteins (CysA), two transmembrane proteins (CysT and CysW) and a solute-binding protein (CysP).

It is found in the cell inner membrane. It catalyses the reaction sulfate(out) + ATP + H2O = sulfate(in) + ADP + phosphate + H(+). It carries out the reaction thiosulfate(out) + ATP + H2O = thiosulfate(in) + ADP + phosphate + H(+). Part of the ABC transporter complex CysAWTP involved in sulfate/thiosulfate import. Responsible for energy coupling to the transport system. This is Sulfate/thiosulfate import ATP-binding protein CysA from Ralstonia nicotianae (strain ATCC BAA-1114 / GMI1000) (Ralstonia solanacearum).